The sequence spans 103 residues: Large ribosomal subunit protein bL21 (103 aa).

This sequence belongs to the bacterial ribosomal protein bL21 family. Part of the 50S ribosomal subunit. Contacts protein L20.

This protein binds to 23S rRNA in the presence of protein L20. In Mycolicibacterium paratuberculosis (strain ATCC BAA-968 / K-10) (Mycobacterium paratuberculosis), this protein is Large ribosomal subunit protein bL21.